The following is a 190-amino-acid chain: Tegument antigen (190 aa).

EF-hand domains lie at 8–43 (SQME…YRLD) and 51–77 (IARF…KVSE). Residues Asp-55, Asp-57, Asp-59, Lys-61, and Glu-66 each contribute to the Ca(2+) site.

Adult and schistosomula tegument.

In Schistosoma mansoni (Blood fluke), this protein is Tegument antigen.